The sequence spans 340 residues: Eukaryotic translation initiation factor 3 subunit I (340 aa).

WD repeat units lie at residues 8 to 47 (GHER…RLGT), 50 to 89 (GHQG…CVKV), 91 to 135 (DFPT…GEGN), 150 to 189 (CEQS…QLQN), 194 to 233 (EFDY…VMKT), and 291 to 330 (GHFG…FDFM).

The protein belongs to the eIF-3 subunit I family. In terms of assembly, component of the eukaryotic translation initiation factor 3 (eIF-3) complex.

The protein resides in the cytoplasm. Component of the eukaryotic translation initiation factor 3 (eIF-3) complex, which is involved in protein synthesis of a specialized repertoire of mRNAs and, together with other initiation factors, stimulates binding of mRNA and methionyl-tRNAi to the 40S ribosome. The eIF-3 complex specifically targets and initiates translation of a subset of mRNAs involved in cell proliferation. The sequence is that of Eukaryotic translation initiation factor 3 subunit I from Coccidioides immitis (strain RS) (Valley fever fungus).